The sequence spans 883 residues: Envelope glycoprotein B (883 aa).

The first 31 residues, 1 to 31, serve as a signal peptide directing secretion; sequence MQSYIAVNIDMASLKMLICVCVAILIPSTLS. Topologically, residues 32–750 are virion surface; that stretch reads QDSHGIAGII…SGIASFLSNP (719 aa). 5 disulfides stabilise this stretch: Cys77–Cys535, Cys94–Cys491, Cys167–Cys229, Cys321–Cys369, and Cys558–Cys608. 2 N-linked (GlcNAc...) asparagine; by host glycosylation sites follow: Asn102 and Asn121. The involved in fusion and/or binding to host membrane stretch occupies residues 134-140; the sequence is TWALFSR. Asn211 is a glycosylation site (N-linked (GlcNAc...) asparagine; by host). Positions 216–223 are involved in fusion and/or binding to host membrane; that stretch reads HQTLGYRT. N-linked (GlcNAc...) asparagine; by host glycosylation is found at Asn262 and Asn360. Residues 428–457 are disordered; it reads QNHLPRGRERRQAAGRRTASLQSGPQGDRI. Residues Asn579, Asn635, and Asn649 are each glycosylated (N-linked (GlcNAc...) asparagine; by host). Hydrophobic membrane proximal region regions lie at residues 694–748 and 724–744; these read IDTV…SFLS and ALGT…SGIA. A helical membrane pass occupies residues 751–771; sequence FAALGIGIAVVVSIILGLLAF. The Intravirion segment spans residues 772–883; it reads KYVMNLKSNP…PSWAEESEDE (112 aa). The interval 791–817 is disordered; the sequence is PPAGTPPRPSRRYYKDEEEVEEDSDED. Residues 806–817 show a composition bias toward acidic residues; sequence DEEEVEEDSDED. Positions 868–871 match the Internalization motif motif; the sequence is YPLL.

Belongs to the herpesviridae glycoprotein B family. In terms of assembly, homotrimer; disulfide-linked. Binds to heparan sulfate proteoglycans. Interacts with gH/gL heterodimer. Post-translationally, a proteolytic cleavage by host furin generates two subunits that remain linked by disulfide bonds.

It is found in the virion membrane. The protein localises to the host cell membrane. The protein resides in the host endosome membrane. Its subcellular location is the host Golgi apparatus membrane. Envelope glycoprotein that forms spikes at the surface of virion envelope. Essential for the initial attachment to heparan sulfate moieties of the host cell surface proteoglycans. Involved in fusion of viral and cellular membranes leading to virus entry into the host cell. Following initial binding to its host receptors, membrane fusion is mediated by the fusion machinery composed at least of gB and the heterodimer gH/gL. May be involved in the fusion between the virion envelope and the outer nuclear membrane during virion egress. The protein is Envelope glycoprotein B of Gallus gallus (Chicken).